We begin with the raw amino-acid sequence, 277 residues long: 14-3-3 protein (277 aa).

Residues 252 to 277 form a disordered region; the sequence is LQTQEQQQQPVGEGAEAPKVEATEQQ. Positions 267–277 are enriched in basic and acidic residues; that stretch reads EAPKVEATEQQ.

Belongs to the 14-3-3 family.

This chain is 14-3-3 protein, found in Eimeria tenella (Coccidian parasite).